The primary structure comprises 280 residues: Ribonuclease Z (280 aa).

Zn(2+) contacts are provided by H61, H63, D65, H66, H153, D176, and H240. D65 serves as the catalytic Proton acceptor.

The protein belongs to the RNase Z family. In terms of assembly, homodimer. Zn(2+) serves as cofactor.

It catalyses the reaction Endonucleolytic cleavage of RNA, removing extra 3' nucleotides from tRNA precursor, generating 3' termini of tRNAs. A 3'-hydroxy group is left at the tRNA terminus and a 5'-phosphoryl group is left at the trailer molecule.. Its function is as follows. Zinc phosphodiesterase, which displays some tRNA 3'-processing endonuclease activity. Probably involved in tRNA maturation, by removing a 3'-trailer from precursor tRNA. The polypeptide is Ribonuclease Z (Mycobacterium bovis (strain BCG / Pasteur 1173P2)).